A 316-amino-acid polypeptide reads, in one-letter code: Acetyl-coenzyme A carboxylase carboxyl transferase subunit alpha (316 aa).

The region spanning N24 to E291 is the CoA carboxyltransferase C-terminal domain.

It belongs to the AccA family. In terms of assembly, acetyl-CoA carboxylase is a heterohexamer composed of biotin carboxyl carrier protein (AccB), biotin carboxylase (AccC) and two subunits each of ACCase subunit alpha (AccA) and ACCase subunit beta (AccD).

The protein localises to the cytoplasm. It carries out the reaction N(6)-carboxybiotinyl-L-lysyl-[protein] + acetyl-CoA = N(6)-biotinyl-L-lysyl-[protein] + malonyl-CoA. Its pathway is lipid metabolism; malonyl-CoA biosynthesis; malonyl-CoA from acetyl-CoA: step 1/1. Component of the acetyl coenzyme A carboxylase (ACC) complex. First, biotin carboxylase catalyzes the carboxylation of biotin on its carrier protein (BCCP) and then the CO(2) group is transferred by the carboxyltransferase to acetyl-CoA to form malonyl-CoA. In Ruthia magnifica subsp. Calyptogena magnifica, this protein is Acetyl-coenzyme A carboxylase carboxyl transferase subunit alpha.